The sequence spans 93 residues: Small ribosomal subunit protein uS19 (93 aa).

It belongs to the universal ribosomal protein uS19 family.

Protein S19 forms a complex with S13 that binds strongly to the 16S ribosomal RNA. The polypeptide is Small ribosomal subunit protein uS19 (Nocardia farcinica (strain IFM 10152)).